The following is a 97-amino-acid chain: Histone H1.C2 (97 aa).

The disordered stretch occupies residues 24–97 (AAVPPKKAAP…KKAVKKAPKK (74 aa)). A compositionally biased stretch (basic residues) spans 31–97 (AAPKKAVAKK…KKAVKKAPKK (67 aa)).

The protein resides in the nucleus. The protein localises to the chromosome. In Trypanosoma cruzi, this protein is Histone H1.C2.